Here is a 139-residue protein sequence, read N- to C-terminus: D-ribose pyranase (139 aa).

Residue H20 is the Proton donor of the active site. Residues D28, H106, and 128-130 (YAN) contribute to the substrate site.

Belongs to the RbsD / FucU family. RbsD subfamily. In terms of assembly, homodecamer.

Its subcellular location is the cytoplasm. The catalysed reaction is beta-D-ribopyranose = beta-D-ribofuranose. Its pathway is carbohydrate metabolism; D-ribose degradation; D-ribose 5-phosphate from beta-D-ribopyranose: step 1/2. Its function is as follows. Catalyzes the interconversion of beta-pyran and beta-furan forms of D-ribose. This chain is D-ribose pyranase, found in Actinobacillus pleuropneumoniae serotype 7 (strain AP76).